The following is a 232-amino-acid chain: NAD(P)H-hydrate epimerase (232 aa).

In terms of domain architecture, YjeF N-terminal spans 9–219 (AISVDEELFN…KLQDKYAMEL (211 aa)). 62–66 (NNGGD) is a binding site for (6S)-NADPHX. Residues N63 and D127 each contribute to the K(+) site. Residues 131–137 (GFSFKPP) and D160 contribute to the (6S)-NADPHX site. Residue S163 coordinates K(+).

It belongs to the NnrE/AIBP family. K(+) is required as a cofactor.

The enzyme catalyses (6R)-NADHX = (6S)-NADHX. It catalyses the reaction (6R)-NADPHX = (6S)-NADPHX. In terms of biological role, catalyzes the epimerization of the S- and R-forms of NAD(P)HX, a damaged form of NAD(P)H that is a result of enzymatic or heat-dependent hydration. This is a prerequisite for the S-specific NAD(P)H-hydrate dehydratase to allow the repair of both epimers of NAD(P)HX. In Aedes aegypti (Yellowfever mosquito), this protein is NAD(P)H-hydrate epimerase.